The primary structure comprises 93 residues: Small ribosomal subunit protein uS19 (93 aa).

It belongs to the universal ribosomal protein uS19 family.

In terms of biological role, protein S19 forms a complex with S13 that binds strongly to the 16S ribosomal RNA. The sequence is that of Small ribosomal subunit protein uS19 from Lactobacillus helveticus (strain DPC 4571).